A 150-amino-acid chain; its full sequence is Ribosome-binding factor A (150 aa).

The interval 119-150 (VAERAKSAQPAGEPDPYRFDGAAAADDDEPAT) is disordered.

Belongs to the RbfA family. Monomer. Binds 30S ribosomal subunits, but not 50S ribosomal subunits or 70S ribosomes.

The protein localises to the cytoplasm. In terms of biological role, one of several proteins that assist in the late maturation steps of the functional core of the 30S ribosomal subunit. Associates with free 30S ribosomal subunits (but not with 30S subunits that are part of 70S ribosomes or polysomes). Required for efficient processing of 16S rRNA. May interact with the 5'-terminal helix region of 16S rRNA. This chain is Ribosome-binding factor A, found in Acidothermus cellulolyticus (strain ATCC 43068 / DSM 8971 / 11B).